Here is a 327-residue protein sequence, read N- to C-terminus: L-lactate dehydrogenase (327 aa).

Residues Val18, Asp39, Lys44, Tyr69, and 83–84 contribute to the NAD(+) site; that span reads GA. Residues Gln86, Arg92, and 124 to 127 each bind substrate; that span reads NPVD. NAD(+) contacts are provided by residues 122–124 and Ser147; that span reads AAN. Position 152–155 (152–155) interacts with substrate; it reads DSAR. Residues Arg157 and His172 each contribute to the beta-D-fructose 1,6-bisphosphate site. Catalysis depends on His179, which acts as the Proton acceptor. Position 224 is a phosphotyrosine (Tyr224). Substrate is bound at residue Thr233.

It belongs to the LDH/MDH superfamily. LDH family. Homotetramer.

The protein localises to the cytoplasm. The catalysed reaction is (S)-lactate + NAD(+) = pyruvate + NADH + H(+). It participates in fermentation; pyruvate fermentation to lactate; (S)-lactate from pyruvate: step 1/1. Its activity is regulated as follows. Allosterically activated by fructose 1,6-bisphosphate (FBP). Catalyzes the conversion of lactate to pyruvate. The protein is L-lactate dehydrogenase of Streptococcus pyogenes serotype M3 (strain SSI-1).